We begin with the raw amino-acid sequence, 265 residues long: ETS-related transcription factor Elf-5 (265 aa).

The 87-residue stretch at 43-129 (YPAFEHQTAC…FILQNIRTQG (87 aa)) folds into the PNT domain. A DNA-binding region (ETS) is located at residues 173–254 (SHLWEFVRDL…VDRRLVYKFG (82 aa)).

It belongs to the ETS family. In terms of tissue distribution, expressed exclusively in tissues with a high content of epithelial cells. Highly expressed in salivary gland, mammary gland, kidney and prostate. Weakly expressed in placenta and lung. Isoform 1 and isoform 2 are differentially expressed in different tissues. In the kidney, only isoform 1 was expressed, while prostate expressed both isoforms, with levels of isoform 2 being higher. Expression is up-regulated during keratinocyte differentiation. Several epithelial carcinoma cell lines showed lack of expression.

It is found in the nucleus. In terms of biological role, transcriptionally activator that may play a role in regulating the later stages of keratinocytes terminal differentiation. Isoform 2 binds to DNA sequences containing the consensus nucleotide core sequence GGA[AT]. Transcriptionally activates SPRR2A and the parotid gland-specific PSP promoters. In Homo sapiens (Human), this protein is ETS-related transcription factor Elf-5 (ELF5).